We begin with the raw amino-acid sequence, 279 residues long: MSTIGSFDGFQPVSLKQEEEDQPSENDHLSTKEGNSGKDPGSRRISRQQSITKATLYPNPYRQPYVSRKYFVTRPGAIETAVEDLKGHIAQTSGETVQGFWLLTEIDHWNNEKEKILLLTDKTLLICKYDFIMLSCVQVQQVPLNAICCICLGKFVFPGMSLDKRPGDGLRIFWGSTEGWSLLSRWNPWSTEVPYATFTEHPMKQTSEKFLEICKLSEFTSKLVPAIENAHKNSAGSGSGKELVVLTQPILIETYTGLMSFIGNRNKLGYSLARGSIGF.

Positions 1–49 (MSTIGSFDGFQPVSLKQEEEDQPSENDHLSTKEGNSGKDPGSRRISRQQ) are disordered. Positions 72-259 (VTRPGAIETA…ILIETYTGLM (188 aa)) constitute a hSac2 domain.

The protein belongs to the TPRG1 family. In terms of tissue distribution, highly expressed in skin. Also detected at low levels in tongue and esophagus.

The protein resides in the cytoplasm. This Mus musculus (Mouse) protein is Tumor protein p63-regulated gene 1 protein.